A 497-amino-acid chain; its full sequence is Signal recognition particle subunit SRP54 2 (497 aa).

The segment at 1–295 (MVLAQLGGSI…DVKPFVSRLL (295 aa)) is G-domain. GTP is bound by residues 108 to 115 (GLQGSGKT), 190 to 194 (DTSGR), and 248 to 251 (TKLD). Positions 296-497 (GMGDLSGLMD…MLGGMGLGGD (202 aa)) are M-domain.

Belongs to the GTP-binding SRP family. SRP54 subfamily. As to quaternary structure, component of a signal recognition particle (SRP) complex that consists of a 7SL RNA molecule of 300 nucleotides and six protein subunits: SRP72, SRP68, SRP54, SRP19, SRP14 and SRP9.

It is found in the cytoplasm. The protein resides in the endoplasmic reticulum. The catalysed reaction is GTP + H2O = GDP + phosphate + H(+). In terms of biological role, component of the signal recognition particle (SRP) complex, a ribonucleoprotein complex that mediates the cotranslational targeting of secretory and membrane proteins to the endoplasmic reticulum (ER). As part of the SRP complex, associates with the SRP receptor (SR) component SRPRA to target secretory proteins to the endoplasmic reticulum membrane. Binds to the signal sequence of presecretory proteins when they emerge from the ribosomes. Displays basal GTPase activity, and stimulates reciprocal GTPase activation of the SR subunit SRPRA. Forms a guanosine 5'-triphosphate (GTP)-dependent complex with the SR subunit SRPRA. SR compaction and GTPase mediated rearrangement of SR drive SRP-mediated cotranslational protein translocation into the ER. Requires the presence of SRP9/SRP14 and/or SRP19 to stably interact with RNA. The sequence is that of Signal recognition particle subunit SRP54 2 (SRP54-2) from Hordeum vulgare (Barley).